A 146-amino-acid chain; its full sequence is Antiholin-like protein LrgA (146 aa).

4 helical membrane passes run 7 to 29, 34 to 53, 65 to 87, and 97 to 119; these read YGFL…IAAI, IPAS…LKVI, LTSL…LGVM, and VILL…ILSL.

The protein belongs to the CidA/LrgA family. LrgA subfamily.

It localises to the cell membrane. Functionally, inhibits the expression or activity of extracellular murein hydrolases by interacting, possibly with LrgB, with the holin-like protein CidA. The LrgAB and CidA proteins may affect the proton motive force of the membrane. May be involved in programmed cell death (PCD), possibly triggering PCD in response to antibiotics and environmental stresses. The protein is Antiholin-like protein LrgA of Bacillus subtilis (strain 168).